Reading from the N-terminus, the 337-residue chain is Holliday junction branch migration complex subunit RuvB (337 aa).

The segment at M1–R27 is disordered. Residues A4–Y187 form a large ATPase domain (RuvB-L) region. ATP contacts are provided by residues R27, G68, K71, T72, T73, E134 to Y136, R177, Y187, and R224. Mg(2+) is bound at residue T72. The segment at N188 to D258 is small ATPAse domain (RuvB-S). The segment at V261 to E337 is head domain (RuvB-H). R297, R316, and R321 together coordinate DNA.

The protein belongs to the RuvB family. In terms of assembly, homohexamer. Forms an RuvA(8)-RuvB(12)-Holliday junction (HJ) complex. HJ DNA is sandwiched between 2 RuvA tetramers; dsDNA enters through RuvA and exits via RuvB. An RuvB hexamer assembles on each DNA strand where it exits the tetramer. Each RuvB hexamer is contacted by two RuvA subunits (via domain III) on 2 adjacent RuvB subunits; this complex drives branch migration. In the full resolvosome a probable DNA-RuvA(4)-RuvB(12)-RuvC(2) complex forms which resolves the HJ.

Its subcellular location is the cytoplasm. It carries out the reaction ATP + H2O = ADP + phosphate + H(+). In terms of biological role, the RuvA-RuvB-RuvC complex processes Holliday junction (HJ) DNA during genetic recombination and DNA repair, while the RuvA-RuvB complex plays an important role in the rescue of blocked DNA replication forks via replication fork reversal (RFR). RuvA specifically binds to HJ cruciform DNA, conferring on it an open structure. The RuvB hexamer acts as an ATP-dependent pump, pulling dsDNA into and through the RuvAB complex. RuvB forms 2 homohexamers on either side of HJ DNA bound by 1 or 2 RuvA tetramers; 4 subunits per hexamer contact DNA at a time. Coordinated motions by a converter formed by DNA-disengaged RuvB subunits stimulates ATP hydrolysis and nucleotide exchange. Immobilization of the converter enables RuvB to convert the ATP-contained energy into a lever motion, pulling 2 nucleotides of DNA out of the RuvA tetramer per ATP hydrolyzed, thus driving DNA branch migration. The RuvB motors rotate together with the DNA substrate, which together with the progressing nucleotide cycle form the mechanistic basis for DNA recombination by continuous HJ branch migration. Branch migration allows RuvC to scan DNA until it finds its consensus sequence, where it cleaves and resolves cruciform DNA. The sequence is that of Holliday junction branch migration complex subunit RuvB from Shewanella loihica (strain ATCC BAA-1088 / PV-4).